Reading from the N-terminus, the 476-residue chain is Ribulose bisphosphate carboxylase large chain (476 aa).

Positions 1–2 (MS) are excised as a propeptide. N-acetylproline is present on P3. K14 is subject to N6,N6,N6-trimethyllysine. Substrate contacts are provided by N123 and T173. K175 acts as the Proton acceptor in catalysis. K177 is a substrate binding site. Residues K201, D203, and E204 each contribute to the Mg(2+) site. K201 carries the N6-carboxylysine modification. Substrate contacts are provided by R295, H327, and S379.

It belongs to the RuBisCO large chain family. Type I subfamily. In terms of assembly, heterohexadecamer of 8 large chains and 8 small chains; disulfide-linked. The disulfide link is formed within the large subunit homodimers. Mg(2+) serves as cofactor. Post-translationally, the disulfide bond which can form in the large chain dimeric partners within the hexadecamer appears to be associated with oxidative stress and protein turnover.

The protein localises to the plastid. The protein resides in the chloroplast. The catalysed reaction is 2 (2R)-3-phosphoglycerate + 2 H(+) = D-ribulose 1,5-bisphosphate + CO2 + H2O. It catalyses the reaction D-ribulose 1,5-bisphosphate + O2 = 2-phosphoglycolate + (2R)-3-phosphoglycerate + 2 H(+). Functionally, ruBisCO catalyzes two reactions: the carboxylation of D-ribulose 1,5-bisphosphate, the primary event in carbon dioxide fixation, as well as the oxidative fragmentation of the pentose substrate in the photorespiration process. Both reactions occur simultaneously and in competition at the same active site. This Barnadesia caryophylla (Xenophontia caryophylla) protein is Ribulose bisphosphate carboxylase large chain.